A 455-amino-acid polypeptide reads, in one-letter code: Golgi pH regulator (455 aa).

4 consecutive transmembrane segments (helical) span residues 46–66 (ITFA…LGAL), 79–99 (LYVI…YFVV), 111–131 (LFAC…GDPF), and 150–170 (VGVI…VNCP). 2 N-linked (GlcNAc...) asparagine glycosylation sites follow: N180 and N243. A run of 4 helical transmembrane segments spans residues 290-310 (GYFF…NIVF), 343-363 (ISFI…LITL), 378-398 (VIVL…VLLM), and 425-445 (WFDV…YLAH).

The protein belongs to the Golgi pH regulator (TC 1.A.38) family. In terms of assembly, homotrimer.

The protein resides in the golgi apparatus membrane. The enzyme catalyses iodide(out) = iodide(in). It carries out the reaction chloride(in) = chloride(out). It catalyses the reaction bromide(in) = bromide(out). The catalysed reaction is fluoride(in) = fluoride(out). In terms of biological role, voltage-gated channel that enables the transfer of anions such as iodide, chloride, bromide and fluoride which may function in counter-ion conductance and participates in Golgi acidification. This is Golgi pH regulator from Salmo salar (Atlantic salmon).